A 716-amino-acid polypeptide reads, in one-letter code: Amino-acid acetyltransferase, mitochondrial (716 aa).

The N-terminal 44 residues, 1–44 (MSLHTGWPRTVNSSFLKKHRSSLCTCQHTSSVLPRSFSTTPDRH), are a transit peptide targeting the mitochondrion. Polar residues predominate over residues 37–56 (FSTTPDRHVQQSADFSSTSR). Disordered regions lie at residues 37 to 58 (FSTT…SRSY) and 96 to 121 (KAQH…TLPS). Over residues 101–112 (KSPDANKPEPEK) the composition is skewed to basic and acidic residues. Residues 537–706 (SRPRLKLDDP…YEAVCRSIQP (170 aa)) enclose the N-acetyltransferase domain.

It belongs to the acetyltransferase family.

The protein resides in the mitochondrion. The catalysed reaction is L-glutamate + acetyl-CoA = N-acetyl-L-glutamate + CoA + H(+). It participates in amino-acid biosynthesis; L-arginine biosynthesis; N(2)-acetyl-L-ornithine from L-glutamate: step 1/4. Its function is as follows. N-acetylglutamate synthase involved in arginine biosynthesis. This chain is Amino-acid acetyltransferase, mitochondrial (arg2), found in Aspergillus fumigatus (strain CBS 144.89 / FGSC A1163 / CEA10) (Neosartorya fumigata).